The following is a 546-amino-acid chain: Chaperonin GroEL (546 aa).

ATP-binding positions include 30-33, lysine 51, 87-91, glycine 415, 479-481, and aspartate 495; these read TLGP, DGTTT, and NAA. The segment at 526 to 546 is disordered; sequence KKDEPAMPAGGGMGGMGGMDF. The segment covering 534 to 546 has biased composition (gly residues); sequence AGGGMGGMGGMDF.

It belongs to the chaperonin (HSP60) family. Forms a cylinder of 14 subunits composed of two heptameric rings stacked back-to-back. Interacts with the co-chaperonin GroES.

The protein localises to the cytoplasm. The catalysed reaction is ATP + H2O + a folded polypeptide = ADP + phosphate + an unfolded polypeptide.. In terms of biological role, together with its co-chaperonin GroES, plays an essential role in assisting protein folding. The GroEL-GroES system forms a nano-cage that allows encapsulation of the non-native substrate proteins and provides a physical environment optimized to promote and accelerate protein folding. The protein is Chaperonin GroEL of Xanthomonas euvesicatoria pv. vesicatoria (strain 85-10) (Xanthomonas campestris pv. vesicatoria).